The chain runs to 419 residues: UPF0229 protein Tbd_1233 (419 aa).

The tract at residues 85-108 (GDRIDRPAGEGGGGSGGSPDGEGM) is disordered. The span at 93 to 104 (GEGGGGSGGSPD) shows a compositional bias: gly residues.

Belongs to the UPF0229 family.

The protein is UPF0229 protein Tbd_1233 of Thiobacillus denitrificans (strain ATCC 25259 / T1).